Consider the following 89-residue polypeptide: U-scoloptoxin(12)-Er1a (89 aa).

The N-terminal stretch at 1-22 (MKGLFLVVFLMWFVSQMNTEET) is a signal peptide.

This sequence belongs to the scoloptoxin-12 family. Contains 3 disulfide bonds. As to expression, expressed by the venom gland.

It is found in the secreted. The protein is U-scoloptoxin(12)-Er1a of Ethmostigmus rubripes (Giant centipede).